We begin with the raw amino-acid sequence, 136 residues long: uncharacterized protein (136 aa).

It is found in the mitochondrion. This is an uncharacterized protein from Marchantia polymorpha (Common liverwort).